Consider the following 34-residue polypeptide: Mytilin-A (34 aa).

4 disulfides stabilise this stretch: C2–C27, C6–C29, C10–C31, and C15–C34.

The protein localises to the secreted. Its function is as follows. Has antibacterial activity against A.viridans, B.megaterium, M.luteus, E.faecalis, S.aureus and E.coli. It is active against the marine species A.carrageenovora, P.alginovora and C.drobachiensis. The chain is Mytilin-A from Mytilus edulis (Blue mussel).